Here is a 199-residue protein sequence, read N- to C-terminus: Chaperone protein TorD (199 aa).

It belongs to the TorD/DmsD family. TorD subfamily.

The protein localises to the cytoplasm. Functionally, involved in the biogenesis of TorA. Acts on TorA before the insertion of the molybdenum cofactor and, as a result, probably favors a conformation of the apoenzyme that is competent for acquiring the cofactor. This chain is Chaperone protein TorD, found in Actinobacillus pleuropneumoniae serotype 7 (strain AP76).